The chain runs to 202 residues: Urease accessory protein UreE (202 aa).

The segment covering 171-188 (HHGHSHSHDHDHDHDHQH) has biased composition (basic and acidic residues). The disordered stretch occupies residues 171-202 (HHGHSHSHDHDHDHDHQHGPGCTHGHRGHDHH).

This sequence belongs to the UreE family.

Its subcellular location is the cytoplasm. Involved in urease metallocenter assembly. Binds nickel. Probably functions as a nickel donor during metallocenter assembly. In Burkholderia ambifaria (strain ATCC BAA-244 / DSM 16087 / CCUG 44356 / LMG 19182 / AMMD) (Burkholderia cepacia (strain AMMD)), this protein is Urease accessory protein UreE.